The primary structure comprises 226 residues: 6-carboxyhexanoate--CoA ligase (226 aa).

Belongs to the BioW family. In terms of assembly, homodimer. Requires Mg(2+) as cofactor.

It catalyses the reaction heptanedioate + ATP + CoA = 6-carboxyhexanoyl-CoA + AMP + diphosphate. Its pathway is metabolic intermediate metabolism; pimeloyl-CoA biosynthesis; pimeloyl-CoA from pimelate: step 1/1. Functionally, catalyzes the transformation of pimelate into pimeloyl-CoA with concomitant hydrolysis of ATP to AMP. In Methanocaldococcus infernus (strain DSM 11812 / JCM 15783 / ME), this protein is 6-carboxyhexanoate--CoA ligase.